The chain runs to 648 residues: Protein kinase YegI (648 aa).

A Protein kinase domain is found at 15–302 (TTLGRELGKG…KAWVAALDSL (288 aa)). Residues 21 to 29 (LGKGGEGAV) and K41 contribute to the ATP site. The active-site Proton acceptor is D143.

In terms of processing, autophosphorylated. Dephosphorylated by PphC.

Probable serine/threonine kinase. The chain is Protein kinase YegI (yegI) from Escherichia coli (strain K12).